Consider the following 200-residue polypeptide: Adenylate kinase (200 aa).

An ATP-binding site is contributed by 11–16 (GAGKGT). Residues 31–60 (STGDIFRQNIKDRTELGQQVQALVDAGNYV) are NMP. AMP contacts are provided by residues Thr32, Arg37, 58-60 (NYV), 86-89 (GYPR), and Gln93. An LID region spans residues 127–137 (RRAAEQGRADD). Arg128 is a binding site for ATP. Residues Arg134 and Arg145 each contribute to the AMP site. Gly173 contacts ATP.

This sequence belongs to the adenylate kinase family. Monomer.

The protein resides in the cytoplasm. It catalyses the reaction AMP + ATP = 2 ADP. Its pathway is purine metabolism; AMP biosynthesis via salvage pathway; AMP from ADP: step 1/1. Functionally, catalyzes the reversible transfer of the terminal phosphate group between ATP and AMP. Plays an important role in cellular energy homeostasis and in adenine nucleotide metabolism. The sequence is that of Adenylate kinase from Clavibacter michiganensis subsp. michiganensis (strain NCPPB 382).